Here is a 175-residue protein sequence, read N- to C-terminus: Transcription factor E (175 aa).

Residues 4–88 enclose the HTH TFE/IIEalpha-type domain; sequence AEDLFINLAK…YWKPNIDQIN (85 aa).

Belongs to the TFE family. Monomer. Interaction with RNA polymerase subunits RpoF and RpoE is necessary for Tfe stimulatory transcription activity. Able to interact with Tbp and RNA polymerase in the absence of DNA promoter. Interacts both with the preinitiation and elongation complexes.

Functionally, transcription factor that plays a role in the activation of archaeal genes transcribed by RNA polymerase. Facilitates transcription initiation by enhancing TATA-box recognition by TATA-box-binding protein (Tbp), and transcription factor B (Tfb) and RNA polymerase recruitment. Not absolutely required for transcription in vitro, but particularly important in cases where Tbp or Tfb function is not optimal. It dynamically alters the nucleic acid-binding properties of RNA polymerases by stabilizing the initiation complex and destabilizing elongation complexes. Seems to translocate with the RNA polymerase following initiation and acts by binding to the non template strand of the transcription bubble in elongation complexes. The protein is Transcription factor E of Saccharolobus islandicus (strain Y.N.15.51 / Yellowstone #2) (Sulfolobus islandicus).